The primary structure comprises 510 residues: Protein phosphatase 1H (510 aa).

One can recognise a PPM-type phosphatase domain in the interval 73–503 (STGYAEVINA…DDISVYVIPL (431 aa)). Disordered regions lie at residues 105 to 128 (VQST…EGLQ) and 188 to 225 (LGEE…PTRF).

The protein belongs to the PP2C family.

It is found in the nucleus. The protein resides in the cytoplasm. The catalysed reaction is O-phospho-L-seryl-[protein] + H2O = L-seryl-[protein] + phosphate. It carries out the reaction O-phospho-L-threonyl-[protein] + H2O = L-threonyl-[protein] + phosphate. This is Protein phosphatase 1H (ppm1h) from Xenopus tropicalis (Western clawed frog).